Reading from the N-terminus, the 512-residue chain is MGMSWWLACAAAFSALCVLKASSLDTFLAAVYEHAVILPKDTLLPVSHSEALALMNQNLDLLEGAIVSAAKQGAHIIVTPEDGIYGVRFTRDTIYPYLEEIPDPQVNWIPCDNPKRFGSTPVQERLSCLAKNNSIYVVANMGDKKPCNTSDSHCPPDGRFQYNTDVVFDSQGKLVARYHKQNIFMGEDQFNVPMEPEFVTFDTPFGKFGVFTCFDILFHDPAVTLVTEFQVDTILFPTAWMDVLPHLAAIEFHSAWAMGMGVNFLAANLHNPSRRMTGSGIYAPDSPRVFHYDRKTQEGKLLFAQLKSHPIHSPVNWTSYASSVESTPTKTQEFQSIVFFDEFTFVELKGIKGNYTVCQNDLCCHLSYQMSEKRADEVYAFGAFDGLHTVEGQYYLQICILLKCKTTNLRTCGSSVDTAFTRFEMFSLSGTFGTRYVFPEVLLSEVKLAPGEFQVSSDGRLVSLKPTSGPVLTIGLFGRLYGKDWASNASSDFIAHSLIIMLIVTPIIHYLC.

Positions 1 to 23 (MGMSWWLACAAAFSALCVLKASS) are cleaved as a signal peptide. The CN hydrolase domain maps to 32-308 (YEHAVILPKD…GKLLFAQLKS (277 aa)). E81 serves as the catalytic Proton acceptor. N132 and N148 each carry an N-linked (GlcNAc...) asparagine glycan. Catalysis depends on K180, which acts as the Proton donor. C213 serves as the catalytic Nucleophile. Residues N316 and N354 are each glycosylated (N-linked (GlcNAc...) asparagine). The GPI-anchor amidated asparagine moiety is linked to residue N488. The propeptide at 489–512 (ASSDFIAHSLIIMLIVTPIIHYLC) is removed in mature form.

Belongs to the carbon-nitrogen hydrolase superfamily. BTD/VNN family. Monomer. In terms of processing, N-glycosylated. As to expression, detected in kidney (at protein level). Ubiquitous.

Its subcellular location is the cell membrane. The catalysed reaction is (R)-pantetheine + H2O = cysteamine + (R)-pantothenate. In terms of biological role, amidohydrolase that hydrolyzes specifically one of the carboamide linkages in D-pantetheine thus recycling pantothenic acid (vitamin B5) and releasing cysteamine. The chain is Pantetheinase (Vnn1) from Mus musculus (Mouse).